Here is a 396-residue protein sequence, read N- to C-terminus: Elongation factor Tu (396 aa).

The tr-type G domain occupies 10–206; the sequence is KPHVNVGTIG…ALDTYIPTPE (197 aa). Residues 19 to 26 are G1; it reads GHVDHGKT. Position 19-26 (19-26) interacts with GTP; the sequence is GHVDHGKT. Thr-26 contacts Mg(2+). Positions 60–64 are G2; the sequence is GITIN. The G3 stretch occupies residues 81 to 84; that stretch reads DCPG. Residues 81–85 and 136–139 contribute to the GTP site; these read DCPGH and NKAD. Residues 136–139 are G4; it reads NKAD. The segment at 174-176 is G5; that stretch reads SAK.

This sequence belongs to the TRAFAC class translation factor GTPase superfamily. Classic translation factor GTPase family. EF-Tu/EF-1A subfamily. In terms of assembly, monomer.

The protein resides in the cytoplasm. It carries out the reaction GTP + H2O = GDP + phosphate + H(+). GTP hydrolase that promotes the GTP-dependent binding of aminoacyl-tRNA to the A-site of ribosomes during protein biosynthesis. The chain is Elongation factor Tu from Bordetella avium (strain 197N).